Consider the following 897-residue polypeptide: Interleukin enhancer-binding factor 3-A (897 aa).

Residues Arg-5 to Gly-379 form the DZF domain. 3 disordered regions span residues Gln-52 to Pro-85, Thr-364 to Val-403, and Met-466 to Ser-502. Composition is skewed to basic and acidic residues over residues Glu-72–Thr-81 and Arg-373–Pro-384. A Bipartite nuclear localization signal motif is present at residues Lys-372–Lys-390. DRBM domains follow at residues Glu-399 to Leu-468 and His-521 to Pro-587. Disordered stretches follow at residues Pro-627–Gly-650 and Gly-708–Ala-797. Gly residues predominate over residues Arg-637 to Gly-650. Residues Pro-714–Pro-747 show a composition bias toward pro residues. Over residues Tyr-749–Ala-794 the composition is skewed to low complexity.

In terms of assembly, a component of a ybx2/frgy2-containing mRNA-ribonucleoprotein (mRNP) complex. Also a component of the CCAAT box transcription factor (CBTF) complex. Phosphorylated. Phosphorylation affects nuclear translocation. In terms of processing, methylated by protein arginine N-methyltransferase 1 (prmt1b) in the RGG-rich domain. Methylation decreases DNA-binding and thereby decreases transcription of the gata2 gene, but does not regulate dsRNA binding or subcellular localization. As to expression, expressed mainly in the ectoderm (at protein level).

It localises to the nucleus. It is found in the cytoplasm. In terms of biological role, RNA-binding protein that plays an essential role in the biogenesis of circular RNAs (circRNAs) which are produced by back-splicing circularization of pre-mRNAs. Within the nucleus, promotes circRNAs processing by stabilizing the regulatory elements residing in the flanking introns of the circularized exons. Plays thereby a role in the back-splicing of a subset of circRNAs. As a consequence, participates in a wide range of transcriptional and post-transcriptional processes. Binds to poly-U elements and AU-rich elements (AREs) in the 3'-UTR of target mRNAs. Upon viral infection, ILF3 accumulates in the cytoplasm and participates in the innate antiviral response. Mechanistically, ILF3 becomes phosphorylated and activated by the double-stranded RNA-activated protein kinase/PKR which releases ILF3 from cellular mature circRNAs. In turn, unbound ILF3 molecules are able to interact with and thus inhibit viral mRNAs. Has a cytoplasmic role early in development as part of a ribonucleoprotein (mRNP) complex which may regulate mRNA transport and/or translation. Following nuclear localization at the mid-blastula transition, acts as a transcription factor and binds the 5'-CCAAT-3' promoter sequence to regulate transcription of the gata2 gene as a subunit of the CCAAT box transcription factor (CBTF). Its role as an mRNP component negatively regulates its activity as a transcription factor by precluding its nuclear localization. The protein is Interleukin enhancer-binding factor 3-A (ilf3-a) of Xenopus laevis (African clawed frog).